The sequence spans 380 residues: Lipid-A-disaccharide synthase (380 aa).

The protein belongs to the LpxB family.

It catalyses the reaction a lipid X + a UDP-2-N,3-O-bis[(3R)-3-hydroxyacyl]-alpha-D-glucosamine = a lipid A disaccharide + UDP + H(+). It participates in bacterial outer membrane biogenesis; LPS lipid A biosynthesis. Its function is as follows. Condensation of UDP-2,3-diacylglucosamine and 2,3-diacylglucosamine-1-phosphate to form lipid A disaccharide, a precursor of lipid A, a phosphorylated glycolipid that anchors the lipopolysaccharide to the outer membrane of the cell. In Pseudomonas syringae pv. syringae (strain B728a), this protein is Lipid-A-disaccharide synthase.